Here is a 180-residue protein sequence, read N- to C-terminus: UPF0340 protein YwlG (180 aa).

Belongs to the UPF0340 family.

In Bacillus subtilis (strain 168), this protein is UPF0340 protein YwlG (ywlG).